The sequence spans 149 residues: Cytochrome c-type biogenesis protein CcmE (149 aa).

At Met-1 to Arg-7 the chain is on the cytoplasmic side. The chain crosses the membrane as a helical; Signal-anchor for type II membrane protein span at residues Leu-8–Ala-28. Topologically, residues Phe-29–Gln-149 are periplasmic. 2 residues coordinate heme: His-123 and Tyr-127.

Belongs to the CcmE/CycJ family.

It is found in the cell inner membrane. In terms of biological role, heme chaperone required for the biogenesis of c-type cytochromes. Transiently binds heme delivered by CcmC and transfers the heme to apo-cytochromes in a process facilitated by CcmF and CcmH. This Rhizobium rhizogenes (strain K84 / ATCC BAA-868) (Agrobacterium radiobacter) protein is Cytochrome c-type biogenesis protein CcmE.